Reading from the N-terminus, the 459-residue chain is DnaJ homolog subfamily A member 1 homolog (459 aa).

Residues 6-73 enclose the J domain; it reads EYYERLGVKP…EKRKMYDSYG (68 aa). A CR-type zinc finger spans residues 158 to 243; that stretch reads GKLVKISISR…CKGKRVIQGK (86 aa). Residues C171, C174, C188, C191, C215, C218, C231, and C234 each coordinate Zn(2+). 4 CXXCXGXG motif repeats span residues 171 to 178, 188 to 195, 215 to 222, and 231 to 238; these read CKTCKGSG, CPTCNGSR, CHTCHGTG, and CKECKGKR. A disordered region spans residues 405–459; that stretch reads NTNEQSSHGGAGGAYQQHGGAYGHQKQQQQGFNPADFGAQFGGGGPQQAQQCQQQ. Low complexity predominate over residues 418 to 435; it reads AYQQHGGAYGHQKQQQQG. C456 is modified (cysteine methyl ester). The S-farnesyl cysteine moiety is linked to residue C456. A propeptide spans 457 to 459 (removed in mature form); that stretch reads QQQ.

The protein localises to the membrane. Its subcellular location is the cytoplasm. It is found in the microsome. The protein resides in the mitochondrion. It localises to the nucleus. The protein localises to the perinuclear region. Functionally, co-chaperone for Hsp70 family members. Plays a role in protein transport into mitochondria and in the regulation of apoptosis via its role as co-chaperone. The sequence is that of DnaJ homolog subfamily A member 1 homolog (dnaja1) from Dictyostelium discoideum (Social amoeba).